The chain runs to 719 residues: Polyribonucleotide nucleotidyltransferase (719 aa).

Mg(2+)-binding residues include Asp491 and Asp497. One can recognise a KH domain in the interval 558 to 617; it reads PRMLTIKINPEKIRDVIGKGGATIRALTEETGTQIDISDDGTIVIASVDETQAKEAQRRI. The S1 motif domain maps to 627–695; sequence GQIYDGSVLR…DKGRLRLSIK (69 aa).

This sequence belongs to the polyribonucleotide nucleotidyltransferase family. Mg(2+) is required as a cofactor.

It is found in the cytoplasm. The catalysed reaction is RNA(n+1) + phosphate = RNA(n) + a ribonucleoside 5'-diphosphate. In terms of biological role, involved in mRNA degradation. Catalyzes the phosphorolysis of single-stranded polyribonucleotides processively in the 3'- to 5'-direction. The polypeptide is Polyribonucleotide nucleotidyltransferase (Bordetella bronchiseptica (strain ATCC BAA-588 / NCTC 13252 / RB50) (Alcaligenes bronchisepticus)).